We begin with the raw amino-acid sequence, 336 residues long: MFLTLIAAIISFMVSAFTMPYFIKFYQLKKIGGQQMHEDVKQHLAKAGTPTMGGTVFLLVATAVSLLVSLFSIKNTQSLALISGILSIVVIYGIIGFLDDFLKIFKQINEGLTAKQKLALQLAGGLMFYFLHVSPSGISSINVFGYQLSLGIFYLFFVLFWVVGFSNAVNLTDGIDGLASISVVISLVTYGVIAYVQGQFDVLLLIGTMIGALLGFFLFNHKPAKVFMGDVGSLALGAMLAAISIALRQEWTLLIIGIVYVLETSSVMLQVSYFKYTKKKYGEGRRIFRMTPFHHHLELGGLSGKGKKWSEWQVDAFLWGVGSLASLLVLAILYVF.

Helical transmembrane passes span 3–23 (LTLI…PYFI), 53–73 (GGTV…LFSI), 78–98 (SLAL…IGFL), 118–138 (LALQ…PSGI), 143–163 (VFGY…FWVV), 174–194 (GIDG…GVIA), 200–220 (FDVL…FLFN), 226–246 (VFMG…ISIA), 251–271 (WTLL…MLQV), and 316–336 (AFLW…LYVF).

This sequence belongs to the glycosyltransferase 4 family. MraY subfamily. It depends on Mg(2+) as a cofactor.

Its subcellular location is the cell membrane. The catalysed reaction is UDP-N-acetyl-alpha-D-muramoyl-L-alanyl-gamma-D-glutamyl-L-lysyl-D-alanyl-D-alanine + di-trans,octa-cis-undecaprenyl phosphate = Mur2Ac(oyl-L-Ala-gamma-D-Glu-L-Lys-D-Ala-D-Ala)-di-trans,octa-cis-undecaprenyl diphosphate + UMP. The protein operates within cell wall biogenesis; peptidoglycan biosynthesis. In terms of biological role, catalyzes the initial step of the lipid cycle reactions in the biosynthesis of the cell wall peptidoglycan: transfers peptidoglycan precursor phospho-MurNAc-pentapeptide from UDP-MurNAc-pentapeptide onto the lipid carrier undecaprenyl phosphate, yielding undecaprenyl-pyrophosphoryl-MurNAc-pentapeptide, known as lipid I. In Streptococcus pyogenes serotype M6 (strain ATCC BAA-946 / MGAS10394), this protein is Phospho-N-acetylmuramoyl-pentapeptide-transferase.